Here is a 188-residue protein sequence, read N- to C-terminus: Ribosome-recycling factor (188 aa).

This sequence belongs to the RRF family.

It localises to the cytoplasm. Responsible for the release of ribosomes from messenger RNA at the termination of protein biosynthesis. May increase the efficiency of translation by recycling ribosomes from one round of translation to another. In Lawsonia intracellularis (strain PHE/MN1-00), this protein is Ribosome-recycling factor.